The sequence spans 531 residues: NAD(P)H-quinone oxidoreductase chain 4 (531 aa).

Transmembrane regions (helical) follow at residues 9–29, 41–61, 93–113, 117–137, 141–161, 173–193, 217–237, 248–268, 282–302, 311–331, 337–357, 381–401, 422–442, and 469–489; these read FPWLSASILFPIGSAFVIPFF, FALSIALITFLITVGSYINGF, MPLILLTSFITALAVLAAWPV, PKLFFFLILVMDGGQIAVFAV, LLFFLTWELELIPVYLLLAIW, FIIYTAGSSIFILLAALAMGF, IFCYVGLLIAFGVKLPIVPLH, TAPVHMLLAGILLKMGGYALL, FAPLLIVLGVVNIIYAALTSF, IAYSSISHMGFVLIGIGSFSS, AMLQMVSHGLIGASLFFLVGA, FALWTACSLASLALPGMSGFV, VVMASLAAIGVILTPIYLLSM, and VYIIACLLLPIIGIGLYPRLV.

Belongs to the complex I subunit 4 family.

Its subcellular location is the cellular thylakoid membrane. The catalysed reaction is a plastoquinone + NADH + (n+1) H(+)(in) = a plastoquinol + NAD(+) + n H(+)(out). It catalyses the reaction a plastoquinone + NADPH + (n+1) H(+)(in) = a plastoquinol + NADP(+) + n H(+)(out). Functionally, NDH-1 shuttles electrons from NAD(P)H, via FMN and iron-sulfur (Fe-S) centers, to quinones in the respiratory chain. The immediate electron acceptor for the enzyme in this species is believed to be plastoquinone. Couples the redox reaction to proton translocation (for every two electrons transferred, four hydrogen ions are translocated across the cytoplasmic membrane), and thus conserves the redox energy in a proton gradient. The chain is NAD(P)H-quinone oxidoreductase chain 4 from Prochlorococcus marinus (strain MIT 9301).